Here is a 704-residue protein sequence, read N- to C-terminus: Polyribonucleotide nucleotidyltransferase (704 aa).

Residues Asp486 and Asp492 each coordinate Mg(2+). The 60-residue stretch at 553 to 612 (PKIVIVKINPDKIRDVIGPGGKQINKIIEETGVKIDTEQDGTIYISSANEEMNARAKQII) folds into the KH domain. The S1 motif domain maps to 622-690 (GEYYLSTVKR…KQGRVNLSRK (69 aa)).

This sequence belongs to the polyribonucleotide nucleotidyltransferase family. It depends on Mg(2+) as a cofactor.

The protein resides in the cytoplasm. The enzyme catalyses RNA(n+1) + phosphate = RNA(n) + a ribonucleoside 5'-diphosphate. Its function is as follows. Involved in mRNA degradation. Catalyzes the phosphorolysis of single-stranded polyribonucleotides processively in the 3'- to 5'-direction. The polypeptide is Polyribonucleotide nucleotidyltransferase (Lysinibacillus sphaericus (strain C3-41)).